Consider the following 625-residue polypeptide: Chaperone protein HtpG (625 aa).

The segment at 1-341 (MERKEFKAES…SEDLSLNISR (341 aa)) is a; substrate-binding. The tract at residues 342 to 551 (EMLQHDRQLK…EGEVSIEMEK (210 aa)) is b. Positions 552–625 (VLRAMPDNQN…FSNDICKVMA (74 aa)) are c.

It belongs to the heat shock protein 90 family. Homodimer.

Its subcellular location is the cytoplasm. In terms of biological role, molecular chaperone. Has ATPase activity. The chain is Chaperone protein HtpG from Halalkalibacterium halodurans (strain ATCC BAA-125 / DSM 18197 / FERM 7344 / JCM 9153 / C-125) (Bacillus halodurans).